The chain runs to 207 residues: ATP synthase subunit b 2 (207 aa).

A helical transmembrane segment spans residues 58–78; the sequence is LLWLVITFGVFYLLMQKVIAP.

This sequence belongs to the ATPase B chain family. F-type ATPases have 2 components, F(1) - the catalytic core - and F(0) - the membrane proton channel. F(1) has five subunits: alpha(3), beta(3), gamma(1), delta(1), epsilon(1). F(0) has three main subunits: a(1), b(2) and c(10-14). The alpha and beta chains form an alternating ring which encloses part of the gamma chain. F(1) is attached to F(0) by a central stalk formed by the gamma and epsilon chains, while a peripheral stalk is formed by the delta and b chains.

It is found in the cell inner membrane. Its function is as follows. F(1)F(0) ATP synthase produces ATP from ADP in the presence of a proton or sodium gradient. F-type ATPases consist of two structural domains, F(1) containing the extramembraneous catalytic core and F(0) containing the membrane proton channel, linked together by a central stalk and a peripheral stalk. During catalysis, ATP synthesis in the catalytic domain of F(1) is coupled via a rotary mechanism of the central stalk subunits to proton translocation. In terms of biological role, component of the F(0) channel, it forms part of the peripheral stalk, linking F(1) to F(0). The b'-subunit is a diverged and duplicated form of b found in plants and photosynthetic bacteria. The sequence is that of ATP synthase subunit b 2 (atpF2) from Rhizobium johnstonii (strain DSM 114642 / LMG 32736 / 3841) (Rhizobium leguminosarum bv. viciae).